The primary structure comprises 231 residues: MSMIPRLLRRMAAVLAGLALLLVALAVSYRWVPPPGSPLMAIRLAQGAPGIDRRWVPLDAISPHLVAAVVASEDSRFCTHHGIDWDAVEAARDHNEAGGRLRGASTLSMQTAKNAFLWPDRTWLRKGAELGFTLLIEATWPKRRIAEVYLNLAEWGDGIFGAEAAARRHFGKPAADLSAQEAALLAAVLPNPRRWSPERPTAYIRNRAATIERRMAIVRRDGLAACILDPA.

The helical transmembrane segment at 12–34 (AAVLAGLALLLVALAVSYRWVPP) threads the bilayer.

Belongs to the glycosyltransferase 51 family.

It is found in the cell inner membrane. It carries out the reaction [GlcNAc-(1-&gt;4)-Mur2Ac(oyl-L-Ala-gamma-D-Glu-L-Lys-D-Ala-D-Ala)](n)-di-trans,octa-cis-undecaprenyl diphosphate + beta-D-GlcNAc-(1-&gt;4)-Mur2Ac(oyl-L-Ala-gamma-D-Glu-L-Lys-D-Ala-D-Ala)-di-trans,octa-cis-undecaprenyl diphosphate = [GlcNAc-(1-&gt;4)-Mur2Ac(oyl-L-Ala-gamma-D-Glu-L-Lys-D-Ala-D-Ala)](n+1)-di-trans,octa-cis-undecaprenyl diphosphate + di-trans,octa-cis-undecaprenyl diphosphate + H(+). Its pathway is cell wall biogenesis; peptidoglycan biosynthesis. Its function is as follows. Peptidoglycan polymerase that catalyzes glycan chain elongation from lipid-linked precursors. The protein is Biosynthetic peptidoglycan transglycosylase of Rhodospirillum centenum (strain ATCC 51521 / SW).